Consider the following 314-residue polypeptide: MGLWALVAFCLLSLILVGSAEQCGGQAGGRVCPGGACCSKFGWCGNTADYCGSGCQSQCSSTGDIGQLITRSMFNDMLKHRNEGSCPGKGFYTYDAFIAAAKAFPGFGTTGDTTTRKREIAAFLAQTSHETTGGWASAPDGPYAWGYCYLREQGSPGAYCVPSAQWPCAAGRKYYGRGPIQISYNYNYGQAGKAIGVDLVNNPDLVATDAVISFKTAFWFWMTPQSPKPSCHNVITGGWTPSGADRSAGRLPGFGVITNIINGGVECGKGVVPQVQDRIGFYKRYCDILRVSYGNNLDCNNQRPFGSGLLLDTI.

The signal sequence occupies residues 1 to 20 (MGLWALVAFCLLSLILVGSA). Positions 21–61 (EQCGGQAGGRVCPGGACCSKFGWCGNTADYCGSGCQSQCSS) constitute a Chitin-binding type-1 domain. 7 disulfides stabilise this stretch: C23–C38, C32–C44, C37–C51, C55–C59, C86–C148, C160–C168, and C267–C299. E130 acts as the Proton donor in catalysis.

It belongs to the glycosyl hydrolase 19 family. Chitinase class I subfamily.

It carries out the reaction Random endo-hydrolysis of N-acetyl-beta-D-glucosaminide (1-&gt;4)-beta-linkages in chitin and chitodextrins.. Defense against chitin-containing fungal pathogens. In Vitis vinifera (Grape), this protein is Basic endochitinase (CHIT1B).